The chain runs to 62 residues: Protein translocase subunit SecE (62 aa).

A helical membrane pass occupies residues 40 to 60; that stretch reads LLVLAVVGVLAYIIQLALTLI.

The protein belongs to the SecE/SEC61-gamma family. As to quaternary structure, component of the Sec protein translocase complex. Heterotrimer consisting of SecY (alpha), SecG (beta) and SecE (gamma) subunits. The heterotrimers can form oligomers, although 1 heterotrimer is thought to be able to translocate proteins. Interacts with the ribosome. May interact with SecDF, and other proteins may be involved.

Its subcellular location is the cell membrane. Its function is as follows. Essential subunit of the Sec protein translocation channel SecYEG. Clamps together the 2 halves of SecY. May contact the channel plug during translocation. The protein is Protein translocase subunit SecE of Saccharolobus solfataricus (strain ATCC 35092 / DSM 1617 / JCM 11322 / P2) (Sulfolobus solfataricus).